The chain runs to 495 residues: Aspartyl/glutamyl-tRNA(Asn/Gln) amidotransferase subunit B (495 aa).

Belongs to the GatB/GatE family. GatB subfamily. As to quaternary structure, heterotrimer of A, B and C subunits.

It carries out the reaction L-glutamyl-tRNA(Gln) + L-glutamine + ATP + H2O = L-glutaminyl-tRNA(Gln) + L-glutamate + ADP + phosphate + H(+). The enzyme catalyses L-aspartyl-tRNA(Asn) + L-glutamine + ATP + H2O = L-asparaginyl-tRNA(Asn) + L-glutamate + ADP + phosphate + 2 H(+). Its function is as follows. Allows the formation of correctly charged Asn-tRNA(Asn) or Gln-tRNA(Gln) through the transamidation of misacylated Asp-tRNA(Asn) or Glu-tRNA(Gln) in organisms which lack either or both of asparaginyl-tRNA or glutaminyl-tRNA synthetases. The reaction takes place in the presence of glutamine and ATP through an activated phospho-Asp-tRNA(Asn) or phospho-Glu-tRNA(Gln). The sequence is that of Aspartyl/glutamyl-tRNA(Asn/Gln) amidotransferase subunit B from Gloeothece citriformis (strain PCC 7424) (Cyanothece sp. (strain PCC 7424)).